The primary structure comprises 370 residues: Anhydro-N-acetylmuramic acid kinase (370 aa).

Residue 13–20 coordinates ATP; the sequence is GTSMDGID.

It belongs to the anhydro-N-acetylmuramic acid kinase family.

The enzyme catalyses 1,6-anhydro-N-acetyl-beta-muramate + ATP + H2O = N-acetyl-D-muramate 6-phosphate + ADP + H(+). It participates in amino-sugar metabolism; 1,6-anhydro-N-acetylmuramate degradation. It functions in the pathway cell wall biogenesis; peptidoglycan recycling. Its function is as follows. Catalyzes the specific phosphorylation of 1,6-anhydro-N-acetylmuramic acid (anhMurNAc) with the simultaneous cleavage of the 1,6-anhydro ring, generating MurNAc-6-P. Is required for the utilization of anhMurNAc either imported from the medium or derived from its own cell wall murein, and thus plays a role in cell wall recycling. The sequence is that of Anhydro-N-acetylmuramic acid kinase from Rhizobium etli (strain ATCC 51251 / DSM 11541 / JCM 21823 / NBRC 15573 / CFN 42).